The sequence spans 364 residues: S-adenosylmethionine:tRNA ribosyltransferase-isomerase (364 aa).

The protein belongs to the QueA family. Monomer.

It is found in the cytoplasm. It carries out the reaction 7-aminomethyl-7-carbaguanosine(34) in tRNA + S-adenosyl-L-methionine = epoxyqueuosine(34) in tRNA + adenine + L-methionine + 2 H(+). Its pathway is tRNA modification; tRNA-queuosine biosynthesis. Transfers and isomerizes the ribose moiety from AdoMet to the 7-aminomethyl group of 7-deazaguanine (preQ1-tRNA) to give epoxyqueuosine (oQ-tRNA). This chain is S-adenosylmethionine:tRNA ribosyltransferase-isomerase, found in Lachnoclostridium phytofermentans (strain ATCC 700394 / DSM 18823 / ISDg) (Clostridium phytofermentans).